The chain runs to 419 residues: G protein-activated inward rectifier potassium channel 4 (419 aa).

Residues 1–86 lie on the Cytoplasmic side of the membrane; it reads MAGDSRNAMN…LFTTLVDLKW (86 aa). S5 bears the Phosphoserine mark. A helical membrane pass occupies residues 87 to 111; that stretch reads RFNLLVFTMVYTVTWLFFGFIWWLI. Residues 112 to 135 are Extracellular-facing; it reads AYIRGDLDHVGDQEWIPCVENLSG. Positions 136–147 form an intramembrane region, helical; Pore-forming; it reads FVSAFLFSIETE. An intramembrane region (pore-forming) is located at residues 148-154; that stretch reads TTIGYGF. The Selectivity filter signature appears at 149 to 154; sequence TIGYGF. Over 155-163 the chain is Extracellular; it reads RVITEKCPE. A helical transmembrane segment spans residues 164-185; it reads GIILLLVQAILGSIVNAFMVGC. The Cytoplasmic segment spans residues 186–419; it reads MFVKISQPKK…GGSREARGSV (234 aa). The interval 390–419 is disordered; it reads AEAGLDAEAEQNEEDEPKGLGGSREARGSV. Residues 394–405 are compositionally biased toward acidic residues; the sequence is LDAEAEQNEEDE.

This sequence belongs to the inward rectifier-type potassium channel (TC 1.A.2.1) family. KCNJ5 subfamily. As to quaternary structure, associates with KCNJ3/GIRK1 to form a G-protein-activated heteromultimer pore-forming unit. The resulting inward current is much larger. Associates with KCNJ6/GIRK2 to form a G-protein-activated heteromultimer pore-forming unit. Islets, exocrine pancreas and heart. Expressed in the adrenal cortex, particularly the zona glomerulosa.

It is found in the membrane. It catalyses the reaction K(+)(in) = K(+)(out). With respect to regulation, heteromultimer composed of KCNJ3/GIRK1 and KCNJ5/GIRK4 is activated by phosphatidylinositol 4,5 biphosphate (PtdIns(4,5)P2). Inward rectifier potassium channels are characterized by a greater tendency to allow potassium to flow into the cell rather than out of it. Their voltage dependence is regulated by the concentration of extracellular potassium; as external potassium is raised, the voltage range of the channel opening shifts to more positive voltages. The inward rectification is mainly due to the blockage of outward current by internal magnesium. Can be blocked by external barium. This potassium channel is controlled by G proteins. This is G protein-activated inward rectifier potassium channel 4 (KCNJ5) from Homo sapiens (Human).